A 644-amino-acid polypeptide reads, in one-letter code: Fructose-1,6-bisphosphatase class 3 (644 aa).

Belongs to the FBPase class 3 family. The cofactor is Mn(2+).

It carries out the reaction beta-D-fructose 1,6-bisphosphate + H2O = beta-D-fructose 6-phosphate + phosphate. The protein operates within carbohydrate biosynthesis; gluconeogenesis. This Oceanobacillus iheyensis (strain DSM 14371 / CIP 107618 / JCM 11309 / KCTC 3954 / HTE831) protein is Fructose-1,6-bisphosphatase class 3.